Consider the following 349-residue polypeptide: Xylitol-binding protein (349 aa).

The N-terminal stretch at 1-22 is a signal peptide; it reads MNITSKIGAIAAAGAVGLGLTA. Cys-23 carries N-palmitoyl cysteine lipidation. Cys-23 carries the S-diacylglycerol cysteine lipid modification. Tyr-42, Asn-121, Arg-173, Asn-224, Asp-249, and Gln-269 together coordinate xylitol.

This sequence belongs to the bacterial solute-binding protein 2 family.

It localises to the cell membrane. Its function is as follows. Part of an ABC transporter complex likely involved in xylitol import. Binds xylitol. In Mycolicibacterium smegmatis (strain ATCC 700084 / mc(2)155) (Mycobacterium smegmatis), this protein is Xylitol-binding protein.